The sequence spans 252 residues: tRNA (guanine-N(1)-)-methyltransferase (252 aa).

Residues Gly-113 and 133–138 (IGDYVL) contribute to the S-adenosyl-L-methionine site.

Belongs to the RNA methyltransferase TrmD family. As to quaternary structure, homodimer.

The protein resides in the cytoplasm. The catalysed reaction is guanosine(37) in tRNA + S-adenosyl-L-methionine = N(1)-methylguanosine(37) in tRNA + S-adenosyl-L-homocysteine + H(+). Its function is as follows. Specifically methylates guanosine-37 in various tRNAs. This chain is tRNA (guanine-N(1)-)-methyltransferase, found in Nitrosococcus oceani (strain ATCC 19707 / BCRC 17464 / JCM 30415 / NCIMB 11848 / C-107).